We begin with the raw amino-acid sequence, 325 residues long: Myo-inositol dehydrogenase Hyg17 (325 aa).

Belongs to the Gfo/Idh/MocA family.

The enzyme catalyses myo-inositol + NAD(+) = myo-inosose-5 + NADH + H(+). Its pathway is antibiotic biosynthesis. Functionally, dehydrogenase involved in the biosynthesis of the aminocyclitol moiety of hygromycin A, a broad-spectrum antibiotic. Catalyzes the NAD(+)-dependent oxidation of myo-inositol to myo-inosose-5 (neo-inosose). Shows reduced activity with scyllo-inositol, minimal activity with L-chiro-inositol and no activity with D-glucose, D-chiro-inositol, epi-inositol, muco-inositol and allo-inositol. Is specific for NAD(+) and cannot use NADP(+). The sequence is that of Myo-inositol dehydrogenase Hyg17 from Streptomyces leeuwenhoekii.